A 226-amino-acid polypeptide reads, in one-letter code: uncharacterized protein (226 aa).

A helical membrane pass occupies residues tyrosine 121 to isoleucine 141.

This sequence to yeast YDL183c.

It localises to the membrane. This is an uncharacterized protein from Schizosaccharomyces pombe (strain 972 / ATCC 24843) (Fission yeast).